We begin with the raw amino-acid sequence, 115 residues long: Iron-sulfur cluster insertion protein ErpA (115 aa).

Residues Cys42, Cys106, and Cys108 each contribute to the iron-sulfur cluster site.

It belongs to the HesB/IscA family. In terms of assembly, homodimer. It depends on iron-sulfur cluster as a cofactor.

In terms of biological role, required for insertion of 4Fe-4S clusters for at least IspG. This Baumannia cicadellinicola subsp. Homalodisca coagulata protein is Iron-sulfur cluster insertion protein ErpA.